The chain runs to 339 residues: Small ribosomal subunit biogenesis GTPase RsgA (339 aa).

The CP-type G domain maps to 111–271 (MRGLLKPVAA…LIDSPGIREF (161 aa)). GTP-binding positions include 159–162 (NKAD) and 213–221 (GQSGVGKSS). Positions 295, 300, 302, and 308 each coordinate Zn(2+).

This sequence belongs to the TRAFAC class YlqF/YawG GTPase family. RsgA subfamily. As to quaternary structure, monomer. Associates with 30S ribosomal subunit, binds 16S rRNA. Requires Zn(2+) as cofactor.

The protein resides in the cytoplasm. Functionally, one of several proteins that assist in the late maturation steps of the functional core of the 30S ribosomal subunit. Helps release RbfA from mature subunits. May play a role in the assembly of ribosomal proteins into the subunit. Circularly permuted GTPase that catalyzes slow GTP hydrolysis, GTPase activity is stimulated by the 30S ribosomal subunit. In Pseudomonas aeruginosa (strain ATCC 15692 / DSM 22644 / CIP 104116 / JCM 14847 / LMG 12228 / 1C / PRS 101 / PAO1), this protein is Small ribosomal subunit biogenesis GTPase RsgA.